Reading from the N-terminus, the 139-residue chain is MKIYLYFIGKPKDPHANAIAEDFLARAGRYSPCEMREIRPERIDLWTKHPTARKIFLDPAGKPMDSAAFAAMISKGEMEGRDLVFLIGGHDGLPPAWRARADLLVSLSAMTFPHELARAMLAEQIYRGFCTLRNHPYIR.

S-adenosyl-L-methionine is bound by residues Leu-57, Gly-88, and 107–112 (LSAMTF).

The protein belongs to the RNA methyltransferase RlmH family. Homodimer.

It is found in the cytoplasm. The catalysed reaction is pseudouridine(1915) in 23S rRNA + S-adenosyl-L-methionine = N(3)-methylpseudouridine(1915) in 23S rRNA + S-adenosyl-L-homocysteine + H(+). In terms of biological role, specifically methylates the pseudouridine at position 1915 (m3Psi1915) in 23S rRNA. The protein is Ribosomal RNA large subunit methyltransferase H of Solibacter usitatus (strain Ellin6076).